We begin with the raw amino-acid sequence, 364 residues long: F-box/LRR-repeat protein At1g55660 (364 aa).

An F-box domain is found at 52–98; it reads MDKISQLPDELLVKVLSFLSTKDAVSTSILSMRWKSLWMWLPKLEYN. 6 LRR repeats span residues 158–179, 185–206, 207–228, 233–254, 256–277, and 279–300; these read NVRELSLKLFNFAELPTKLPKS, SIVILKLKDEILVDVPRKVCLP, SLKTLFLGRVTYSDANSLHRLL, VLEDLVMERDKIDNLGKLSVIV, SLQRLTLKMSRPCHLDGLKMNS, and SLKYLKVIDERLESDSDDESDS.

The chain is F-box/LRR-repeat protein At1g55660 from Arabidopsis thaliana (Mouse-ear cress).